Here is a 168-residue protein sequence, read N- to C-terminus: Diphosphoinositol polyphosphate phosphohydrolase 1 (168 aa).

M1 carries the post-translational modification N-acetylmethionine. Residues R10, K18–R20, and S39–R41 contribute to the substrate site. The 128-residue stretch at Y17–R144 folds into the Nudix hydrolase domain. The Mg(2+) site is built by G50 and E66. Residues G51 to G72 carry the Nudix box motif. Catalysis depends on E69, which acts as the Proton acceptor. Mg(2+) is bound at residue E70. Substrate-binding positions include R89 to H91, R115, and K133.

It belongs to the Nudix hydrolase family. DIPP subfamily. In terms of assembly, monomer. Mg(2+) is required as a cofactor. It depends on Mn(2+) as a cofactor. Requires Zn(2+) as cofactor. Present in heart, lung, liver and spleen (at protein level). Widely expressed.

The protein localises to the cytoplasm. It is found in the nucleus. It catalyses the reaction diphospho-myo-inositol polyphosphate + H2O = myo-inositol polyphosphate + phosphate.. It carries out the reaction 5-diphospho-1D-myo-inositol 1,2,3,4,6-pentakisphosphate + H2O = 1D-myo-inositol hexakisphosphate + phosphate + H(+). The catalysed reaction is 3,5-bis(diphospho)-1D-myo-inositol 1,2,4,6-tetrakisphosphate + H2O = 3-diphospho-1D-myo-inositol 1,2,4,5,6-pentakisphosphate + phosphate + 2 H(+). The enzyme catalyses [phosphate](n+1) + n H2O = (n+1) phosphate + n H(+). It catalyses the reaction P(1),P(5)-bis(5'-adenosyl) pentaphosphate + H2O = ADP + ATP + 2 H(+). It carries out the reaction P(1),P(6)-bis(5'-adenosyl) hexaphosphate + H2O = 2 ATP + 2 H(+). The catalysed reaction is P(1),P(4)-bis(5'-adenosyl) tetraphosphate + H2O = AMP + ATP + 2 H(+). The enzyme catalyses a 5'-end (N(7)-methyl 5'-triphosphoguanosine)-ribonucleoside in mRNA + H2O = N(7)-methyl-GMP + a 5'-end diphospho-ribonucleoside in mRNA + 2 H(+). It catalyses the reaction a 5'-end (N(7)-methyl 5'-triphosphoguanosine)-ribonucleoside in mRNA + H2O = N(7)-methyl-GDP + a 5'-end phospho-ribonucleoside in mRNA + 2 H(+). Cleaves a beta-phosphate from the diphosphate groups in PP-InsP5 (diphosphoinositol pentakisphosphate) and [PP]2-InsP4 (bisdiphosphoinositol tetrakisphosphate), suggesting that it may play a role in signal transduction. InsP6 (inositol hexakisphosphate) is not a substrate. Also able to catalyze the hydrolysis of dinucleoside oligophosphates, with diadenosine 5',5'''-P1,P6-hexaphosphate (Ap6A) and diadenosine 5',5'''- P1,P5-pentaphosphate (Ap5A) being the preferred substrates. The major reaction products are ADP and p4a from Ap6A and ADP and ATP from Ap5A. Also able to hydrolyze 5- phosphoribose 1-diphosphate. Acts as a negative regulator of the ERK1/2 pathway. Acts as a decapping enzyme that can hydrolyze both monomethylated and unmethylated capped RNAs. Hydrolyzes monomethylated capped RNA after both the alpha- and beta-phosphates generating m7GMP + ppRNA and m7GDP + pRNA. Modulates the stability of a subset of mRNAs implicated in cell motility. Divalent cations zinc, magnesium and manganese determine its substrate specificity. Exhibits diphosphoinositol polyphosphate phosphohydrolase in the presence of magnesium ions, diadenosine hexaphosphate hydrolase activity in the presence of manganese ions and endopolyphosphatase activity in the presence of zinc ions. Plays an important role in limiting DNA damage and maintaining cell survival upon oxidative stress via its endopolyphosphatase activity. This is Diphosphoinositol polyphosphate phosphohydrolase 1 from Mus musculus (Mouse).